Consider the following 61-residue polypeptide: Large ribosomal subunit protein eL37 (61 aa).

Residues cysteine 20, cysteine 23, cysteine 35, and cysteine 38 each coordinate Zn(2+). A C4-type zinc finger spans residues 20 to 38 (CRRCGRRAYHVRKKRCAAC).

This sequence belongs to the eukaryotic ribosomal protein eL37 family. Zn(2+) is required as a cofactor.

Functionally, binds to the 23S rRNA. The polypeptide is Large ribosomal subunit protein eL37 (rpl37e) (Methanocaldococcus jannaschii (strain ATCC 43067 / DSM 2661 / JAL-1 / JCM 10045 / NBRC 100440) (Methanococcus jannaschii)).